The sequence spans 556 residues: Oxygen-dependent choline dehydrogenase (556 aa).

6-35 is a binding site for FAD; sequence DYIIIGAGSAGNVLAARLTEDPGVSVLLLE. Histidine 475 acts as the Proton acceptor in catalysis.

This sequence belongs to the GMC oxidoreductase family. It depends on FAD as a cofactor.

It carries out the reaction choline + A = betaine aldehyde + AH2. The catalysed reaction is betaine aldehyde + NAD(+) + H2O = glycine betaine + NADH + 2 H(+). Its pathway is amine and polyamine biosynthesis; betaine biosynthesis via choline pathway; betaine aldehyde from choline (cytochrome c reductase route): step 1/1. Involved in the biosynthesis of the osmoprotectant glycine betaine. Catalyzes the oxidation of choline to betaine aldehyde and betaine aldehyde to glycine betaine at the same rate. This Xanthomonas campestris pv. campestris (strain 8004) protein is Oxygen-dependent choline dehydrogenase.